Here is a 579-residue protein sequence, read N- to C-terminus: Adenine deaminase (579 aa).

This sequence belongs to the metallo-dependent hydrolases superfamily. Adenine deaminase family. Mn(2+) is required as a cofactor.

The enzyme catalyses adenine + H2O + H(+) = hypoxanthine + NH4(+). The sequence is that of Adenine deaminase from Listeria welshimeri serovar 6b (strain ATCC 35897 / DSM 20650 / CCUG 15529 / CIP 8149 / NCTC 11857 / SLCC 5334 / V8).